The chain runs to 393 residues: NADH-quinone oxidoreductase subunit D 2 (393 aa).

Belongs to the complex I 49 kDa subunit family. As to quaternary structure, NDH-1 is composed of 14 different subunits. Subunits NuoB, C, D, E, F, and G constitute the peripheral sector of the complex.

The protein localises to the cell inner membrane. It catalyses the reaction a quinone + NADH + 5 H(+)(in) = a quinol + NAD(+) + 4 H(+)(out). Its function is as follows. NDH-1 shuttles electrons from NADH, via FMN and iron-sulfur (Fe-S) centers, to quinones in the respiratory chain. The immediate electron acceptor for the enzyme in this species is believed to be a menaquinone. Couples the redox reaction to proton translocation (for every two electrons transferred, four hydrogen ions are translocated across the cytoplasmic membrane), and thus conserves the redox energy in a proton gradient. This is NADH-quinone oxidoreductase subunit D 2 from Cytophaga hutchinsonii (strain ATCC 33406 / DSM 1761 / CIP 103989 / NBRC 15051 / NCIMB 9469 / D465).